A 189-amino-acid polypeptide reads, in one-letter code: Mercury resistance operon ORF3 (189 aa).

Positions 1-27 form a signal peptide, tat-type signal; it reads MTSPSPTARRTRLRRRTALALAAAATA. Residues 38–189 form the Thioredoxin domain; that stretch reads TKANTPATRA…IQDALKKAGA (152 aa).

In terms of processing, predicted to be exported by the Tat system. The position of the signal peptide cleavage has not been experimentally proven.

Its subcellular location is the secreted. Its function is as follows. Probable mercury binding protein. The chain is Mercury resistance operon ORF3 from Streptomyces lividans.